The primary structure comprises 387 residues: Putative transmembrane protein At3g54730 (387 aa).

Over residues 10–25 the composition is skewed to pro residues; sequence PAPPLLLPSPNPPPCA. Residues 10-45 form a disordered region; sequence PAPPLLLPSPNPPPCALPQDLTSLVSPSEPPDPPDP. 8 helical membrane-spanning segments follow: residues 97–117, 128–148, 154–174, 186–206, 221–241, 292–312, 335–355, and 362–382; these read VFPLACLELWFSIPHLSHPLV, GSNFFEFFTFFWNMPSFILQF, VMISTSFRLVLPQYEAVMILL, VLFSIGLRIQLLLPQYEVGLI, IQKLWLRAIHVIVSLVWFLEI, SWCFVAYAIVAVFHDAFYPLE, FSTIGVSNFSCLTVMYVFIFF, and PFVAVVSLAFVASLMYLLNHF.

The protein localises to the membrane. The protein is Putative transmembrane protein At3g54730 of Arabidopsis thaliana (Mouse-ear cress).